Here is a 338-residue protein sequence, read N- to C-terminus: RNA 3'-terminal phosphate cyclase (338 aa).

Residues Gln103 and 283-287 (YLADQ) each bind ATP. His308 (tele-AMP-histidine intermediate) is an active-site residue.

This sequence belongs to the RNA 3'-terminal cyclase family. Type 1 subfamily.

It localises to the cytoplasm. The catalysed reaction is a 3'-end 3'-phospho-ribonucleotide-RNA + ATP = a 3'-end 2',3'-cyclophospho-ribonucleotide-RNA + AMP + diphosphate. In terms of biological role, catalyzes the conversion of 3'-phosphate to a 2',3'-cyclic phosphodiester at the end of RNA. The mechanism of action of the enzyme occurs in 3 steps: (A) adenylation of the enzyme by ATP; (B) transfer of adenylate to an RNA-N3'P to produce RNA-N3'PP5'A; (C) and attack of the adjacent 2'-hydroxyl on the 3'-phosphorus in the diester linkage to produce the cyclic end product. The biological role of this enzyme is unknown but it is likely to function in some aspects of cellular RNA processing. The polypeptide is RNA 3'-terminal phosphate cyclase (Escherichia coli O139:H28 (strain E24377A / ETEC)).